Here is a 200-residue protein sequence, read N- to C-terminus: Probable molybdenum cofactor guanylyltransferase (200 aa).

GTP-binding positions include 9–11, Lys-21, Asp-69, and Asp-100; that span reads LAG. Asp-100 contributes to the Mg(2+) binding site.

It belongs to the MobA family. Mg(2+) is required as a cofactor.

The protein resides in the cytoplasm. It catalyses the reaction Mo-molybdopterin + GTP + H(+) = Mo-molybdopterin guanine dinucleotide + diphosphate. Its function is as follows. Transfers a GMP moiety from GTP to Mo-molybdopterin (Mo-MPT) cofactor (Moco or molybdenum cofactor) to form Mo-molybdopterin guanine dinucleotide (Mo-MGD) cofactor. The polypeptide is Probable molybdenum cofactor guanylyltransferase (Bacillus cereus (strain ATCC 10987 / NRS 248)).